The primary structure comprises 331 residues: HTH-type transcriptional regulator RipA (331 aa).

One can recognise an HTH araC/xylS-type domain in the interval 112-209 (RAVAQVLVSN…GATPSTFTTG (98 aa)). 2 DNA-binding regions (H-T-H motif) span residues 129-150 (EEFAEIQGVSARTLQRQFLKST) and 176-199 (ISVVANLVGFAATSSLTRAFRRHT).

Functionally, under iron limitation, RipA negatively controls the expression of the acn (aconitase), catA (catechol 1,2 dioxygenase), leuCD (isopropylmalate dehydratase), narKGHJI (nitrite/nitrate transporter and nitrate reductase), sdhCAB (succinate dehydrogenase), pta (phosphotransacetylase) and katA (catalase) genes. Binds to the consensus sequence in the promoter region. This chain is HTH-type transcriptional regulator RipA, found in Corynebacterium glutamicum (strain ATCC 13032 / DSM 20300 / JCM 1318 / BCRC 11384 / CCUG 27702 / LMG 3730 / NBRC 12168 / NCIMB 10025 / NRRL B-2784 / 534).